A 177-amino-acid polypeptide reads, in one-letter code: Cyclic pyranopterin monophosphate synthase 3 (177 aa).

Residues 79–81 (LCH) and 116–117 (ME) each bind substrate. The active site involves Asp-131. Positions 150 to 177 (KSGGRSGHYRRHDADVKPSDGGSTEDGC) are disordered.

It belongs to the MoaC family. In terms of assembly, homohexamer; trimer of dimers.

It catalyses the reaction (8S)-3',8-cyclo-7,8-dihydroguanosine 5'-triphosphate = cyclic pyranopterin phosphate + diphosphate. It participates in cofactor biosynthesis; molybdopterin biosynthesis. In terms of biological role, catalyzes the conversion of (8S)-3',8-cyclo-7,8-dihydroguanosine 5'-triphosphate to cyclic pyranopterin monophosphate (cPMP). This is Cyclic pyranopterin monophosphate synthase 3 (moaC3) from Mycobacterium bovis (strain ATCC BAA-935 / AF2122/97).